The chain runs to 682 residues: DNA ligase (682 aa).

NAD(+) is bound by residues 42 to 46 (DAEYD), 91 to 92 (SL), and Glu124. Lys126 functions as the N6-AMP-lysine intermediate in the catalytic mechanism. Arg147, Glu184, Lys302, and Lys326 together coordinate NAD(+). Zn(2+) contacts are provided by Cys420, Cys423, Cys438, and Cys444. Residues 603 to 682 (IADNPLKGKS…QEFIALTGEN (80 aa)) enclose the BRCT domain.

This sequence belongs to the NAD-dependent DNA ligase family. LigA subfamily. It depends on Mg(2+) as a cofactor. Mn(2+) serves as cofactor.

The catalysed reaction is NAD(+) + (deoxyribonucleotide)n-3'-hydroxyl + 5'-phospho-(deoxyribonucleotide)m = (deoxyribonucleotide)n+m + AMP + beta-nicotinamide D-nucleotide.. DNA ligase that catalyzes the formation of phosphodiester linkages between 5'-phosphoryl and 3'-hydroxyl groups in double-stranded DNA using NAD as a coenzyme and as the energy source for the reaction. It is essential for DNA replication and repair of damaged DNA. The chain is DNA ligase from Actinobacillus pleuropneumoniae serotype 7 (strain AP76).